We begin with the raw amino-acid sequence, 347 residues long: tRNA dimethylallyltransferase (347 aa).

ATP is bound at residue 20–27 (GPTASGKT). 22–27 (TASGKT) provides a ligand contact to substrate. Interaction with substrate tRNA stretches follow at residues 45 to 48 (DSAM), 169 to 173 (QRLMR), and 275 to 280 (RCVGYR).

It belongs to the IPP transferase family. As to quaternary structure, monomer. Mg(2+) serves as cofactor.

The catalysed reaction is adenosine(37) in tRNA + dimethylallyl diphosphate = N(6)-dimethylallyladenosine(37) in tRNA + diphosphate. Functionally, catalyzes the transfer of a dimethylallyl group onto the adenine at position 37 in tRNAs that read codons beginning with uridine, leading to the formation of N6-(dimethylallyl)adenosine (i(6)A). This is tRNA dimethylallyltransferase from Marinobacter nauticus (strain ATCC 700491 / DSM 11845 / VT8) (Marinobacter aquaeolei).